The chain runs to 168 residues: MVEDILAPGLRVVFCGINPGLSSAEKGFPFAHPANRFWKVIHQAGFTDRQLKPQEAQLLLDYRCGVTKLVDRPTVQANEVTKLELHAGGRKLIEKIEDYQPQALAILGKQAYEQGFSQRGTQWGKQTHTIGATQIWVLPNPSGLSRVSLEKLVEAYRELDQSLVMRGL.

This sequence belongs to the uracil-DNA glycosylase (UDG) superfamily. TDG/mug family. Binds DNA as a monomer.

The protein localises to the cytoplasm. It carries out the reaction Specifically hydrolyzes mismatched double-stranded DNA and polynucleotides, releasing free uracil.. In terms of biological role, excises ethenocytosine and uracil, which can arise by alkylation or deamination of cytosine, respectively, from the corresponding mispairs with guanine in ds-DNA. It is capable of hydrolyzing the carbon-nitrogen bond between the sugar-phosphate backbone of the DNA and the mispaired base. The complementary strand guanine functions in substrate recognition. Required for DNA damage lesion repair in stationary-phase cells. In Escherichia fergusonii (strain ATCC 35469 / DSM 13698 / CCUG 18766 / IAM 14443 / JCM 21226 / LMG 7866 / NBRC 102419 / NCTC 12128 / CDC 0568-73), this protein is G/U mismatch-specific DNA glycosylase.